We begin with the raw amino-acid sequence, 79 residues long: Short neurotoxin 3 (79 aa).

Residues Met1–Thr23 form the signal peptide. 4 cysteine pairs are disulfide-bonded: Cys24–Cys41, Cys34–Cys59, Cys63–Cys71, and Cys72–Cys77.

It belongs to the three-finger toxin family. Short-chain subfamily. Expressed by the venom gland.

The protein localises to the secreted. This chain is Short neurotoxin 3, found in Oxyuranus scutellatus scutellatus (Australian taipan).